Here is a 126-residue protein sequence, read N- to C-terminus: MAILGLGTDIVEIARIAAVVERSGDQLARRVLAPAEWQQYLTHAQRVRYLAKRFAVKEAAAKALGTGIRQGLAFAQFEVANDTLGKPRLILHGRAAELAADLGIASLHVSLADERRYACATVIAEG.

Asp9 and Glu58 together coordinate Mg(2+).

This sequence belongs to the P-Pant transferase superfamily. AcpS family. Requires Mg(2+) as cofactor.

It localises to the cytoplasm. The enzyme catalyses apo-[ACP] + CoA = holo-[ACP] + adenosine 3',5'-bisphosphate + H(+). Its function is as follows. Transfers the 4'-phosphopantetheine moiety from coenzyme A to a Ser of acyl-carrier-protein. The polypeptide is Holo-[acyl-carrier-protein] synthase (Edwardsiella ictaluri (strain 93-146)).